Here is a 502-residue protein sequence, read N- to C-terminus: UTP--glucose-1-phosphate uridylyltransferase 2 (502 aa).

The interval 1–20 (MMKPDLNSPLPQSPQLQAFG) is disordered. Over residues 9 to 20 (PLPQSPQLQAFG) the composition is skewed to polar residues. Residues 114–117 (LNGG), lysine 128, glutamine 191, and glycine 220 each bind UTP. 116-117 (GG) provides a ligand contact to substrate. Substrate is bound by residues histidine 221 and 249–251 (NVD). The UTP site is built by aspartate 251 and lysine 390.

Belongs to the UDPGP type 1 family.

It carries out the reaction alpha-D-glucose 1-phosphate + UTP + H(+) = UDP-alpha-D-glucose + diphosphate. In terms of biological role, plays a central role as a glucosyl donor in cellular metabolic pathways. The protein is UTP--glucose-1-phosphate uridylyltransferase 2 (ugpB) of Dictyostelium discoideum (Social amoeba).